We begin with the raw amino-acid sequence, 67 residues long: Large ribosomal subunit protein bL31 (67 aa).

Positions 16, 18, 37, and 40 each coordinate Zn(2+).

The protein belongs to the bacterial ribosomal protein bL31 family. Type A subfamily. As to quaternary structure, part of the 50S ribosomal subunit. It depends on Zn(2+) as a cofactor.

In terms of biological role, binds the 23S rRNA. In Methylococcus capsulatus (strain ATCC 33009 / NCIMB 11132 / Bath), this protein is Large ribosomal subunit protein bL31.